The chain runs to 229 residues: ATP synthase subunit a 3 (229 aa).

A run of 6 helical transmembrane segments spans residues 25 to 45 (ADAV…SFLA), 86 to 106 (VATI…PGFF), 111 to 131 (NINT…VVGI), 142 to 162 (FCGP…IGHL), 181 to 201 (LVLI…MMLM), and 202 to 222 (GVLV…IYIQ).

The protein belongs to the ATPase A chain family. As to quaternary structure, F-type ATPases have 2 components, CF(1) - the catalytic core - and CF(0) - the membrane proton channel. CF(1) has five subunits: alpha(3), beta(3), gamma(1), delta(1), epsilon(1). CF(0) has three main subunits: a(1), b(2) and c(9-12). The alpha and beta chains form an alternating ring which encloses part of the gamma chain. CF(1) is attached to CF(0) by a central stalk formed by the gamma and epsilon chains, while a peripheral stalk is formed by the delta and b chains.

It localises to the cell inner membrane. In terms of biological role, key component of the proton channel; it plays a direct role in the translocation of protons across the membrane. In Pelobacter propionicus (strain DSM 2379 / NBRC 103807 / OttBd1), this protein is ATP synthase subunit a 3.